We begin with the raw amino-acid sequence, 473 residues long: Monocarboxylate transporter 4 (473 aa).

Residues 1 to 17 are Cytoplasmic-facing; the sequence is MGAVVVDDGPSGVKAPD. A helical membrane pass occupies residues 18 to 38; the sequence is GGWGWAVLFGCFIITGFSYAF. Over 39-61 the chain is Extracellular; that stretch reads PKAVSVFFKELIREFGVGYSDTA. The helical transmembrane segment at 62 to 82 threads the bilayer; that stretch reads WISSILLAMLYGTGPLCSVCV. Residues 83 to 91 lie on the Cytoplasmic side of the membrane; the sequence is NRFGCRPVM. Residues 92–112 traverse the membrane as a helical segment; the sequence is LVGGLFASMGMVIASFCTSIV. Residues 113-115 are Extracellular-facing; the sequence is QIY. A helical transmembrane segment spans residues 116 to 136; the sequence is LTAGVITGLGLALNFQPSLIM. Topologically, residues 137-149 are cytoplasmic; the sequence is LNRYFDKRRPLAN. The chain crosses the membrane as a helical span at residues 150-170; it reads GLSAAGSPVFLCALSPLGQIL. Topologically, residues 171–179 are extracellular; that stretch reads QHEYGWRGG. A helical transmembrane segment spans residues 180–200; that stretch reads FLILGGMLLNCCVCGALMRPL. The Cytoplasmic segment spans residues 201–231; it reads EPPKKSEATKEPAEKKAKKKLLDFSVFKDGG. The chain crosses the membrane as a helical span at residues 232–252; that stretch reads FVIYTLAASIMVLGLFVPPVF. Topologically, residues 253-268 are extracellular; sequence VVSYAKDLGYQDTKAA. A helical transmembrane segment spans residues 269–289; it reads FLLTILGFIDIFARPICGMVA. At 290–297 the chain is on the cytoplasmic side; sequence GLKWVRPR. Residues 298–318 traverse the membrane as a helical segment; that stretch reads CVYLFSFAMIFNGFTDLMGSM. Topologically, residues 319–321 are extracellular; sequence SVD. The chain crosses the membrane as a helical span at residues 322 to 342; the sequence is YGGLVVFCIFFGISYGMVGAL. Residues 343–358 lie on the Cytoplasmic side of the membrane; the sequence is QFEVLMAIVGTQKFSS. A helical transmembrane segment spans residues 359–379; sequence AIGLVLLAEAMAVLIGPPSAG. At 380-388 the chain is on the extracellular side; that stretch reads KLLDLTRRY. A helical membrane pass occupies residues 389–409; the sequence is MFVFIIAGIEVTTSALVLALG. Over 410 to 473 the chain is Cytoplasmic; that stretch reads NFFCIKKKPA…EVVTNPETCV (64 aa). Positions 421-447 are disordered; that stretch reads PHTKEAAAEREELNKSEDKTPEDAKVD. Basolateral sorting signal stretches follow at residues 427 to 449 and 449 to 473; these read AAER…VDSI and IEVE…ETCV.

The protein belongs to the major facilitator superfamily. Monocarboxylate porter (TC 2.A.1.13) family. Interacts with BSG; interaction mediates SLC16A3 targeting to the plasma membrane.

It is found in the cell membrane. The protein resides in the basolateral cell membrane. The enzyme catalyses (S)-lactate(in) + H(+)(in) = (S)-lactate(out) + H(+)(out). It catalyses the reaction pyruvate(out) + H(+)(out) = pyruvate(in) + H(+)(in). Its function is as follows. Proton-dependent transporter of monocarboxylates such as L-lactate and pyruvate. Plays a predominant role in the L-lactate efflux from highly glycolytic cells. This chain is Monocarboxylate transporter 4 (SLC16A3), found in Gallus gallus (Chicken).